The primary structure comprises 473 residues: Photosystem II CP43 reaction center protein (473 aa).

A propeptide spanning residues 1–14 (MKTLYSLRRFSHVE) is cleaved from the precursor. Thr15 carries the N-acetylthreonine modification. Thr15 bears the Phosphothreonine mark. Helical transmembrane passes span 69–93 (LFEV…PHLA), 134–155 (LLGP…KDRN), 178–200 (KALY…RKIT), 255–275 (KPFA…LSYS), and 291–312 (WFNN…ASQA). Glu367 serves as a coordination point for [CaMn4O5] cluster. A helical membrane pass occupies residues 447–471 (RARAAAAGFEKGIDRDFEPVLSMTP).

It belongs to the PsbB/PsbC family. PsbC subfamily. PSII is composed of 1 copy each of membrane proteins PsbA, PsbB, PsbC, PsbD, PsbE, PsbF, PsbH, PsbI, PsbJ, PsbK, PsbL, PsbM, PsbT, PsbX, PsbY, PsbZ, Psb30/Ycf12, at least 3 peripheral proteins of the oxygen-evolving complex and a large number of cofactors. It forms dimeric complexes. It depends on Binds multiple chlorophylls and provides some of the ligands for the Ca-4Mn-5O cluster of the oxygen-evolving complex. It may also provide a ligand for a Cl- that is required for oxygen evolution. PSII binds additional chlorophylls, carotenoids and specific lipids. as a cofactor.

Its subcellular location is the plastid membrane. Its function is as follows. One of the components of the core complex of photosystem II (PSII). It binds chlorophyll and helps catalyze the primary light-induced photochemical processes of PSII. PSII is a light-driven water:plastoquinone oxidoreductase, using light energy to abstract electrons from H(2)O, generating O(2) and a proton gradient subsequently used for ATP formation. The polypeptide is Photosystem II CP43 reaction center protein (Cuscuta obtusiflora (Peruvian dodder)).